We begin with the raw amino-acid sequence, 374 residues long: Type IV secretion system protein PtlG (374 aa).

Residues 38-56 (WMFALVAVALSCLLATGIW) traverse the membrane as a helical segment. The disordered stretch occupies residues 86-117 (HPREPEPAPLPDMPAAPDPILPQPRPAPPVPP). The span at 92–117 (PAPLPDMPAAPDPILPQPRPAPPVPP) shows a compositional bias: pro residues.

The protein belongs to the TrbI/VirB10 family.

It is found in the cell membrane. Component of the type IV secretion system ptl required for secretion of assembled pertussis toxin (PTX) through the outer membrane. The chain is Type IV secretion system protein PtlG (ptlG) from Bordetella pertussis (strain Tohama I / ATCC BAA-589 / NCTC 13251).